Here is a 573-residue protein sequence, read N- to C-terminus: MASTEGANNMPKQVEVRMHDSHLSSEEPKHRNLGMRMCDKLGKNLLLSLTVFGVILGAVCGGLLRLAAPIHPDVVMLIAFPGDILMRMLKMLILPLIISSLITGLSGLDAKASGRLGTRAMVYYMSTTIIAAVLGVILVLAIHPGNPKLKKQLGPGKKNDEVSSLDAFLDLIRNLFPENLVQACFQQIQTVTKKVLVAPPSEEANTTKAVISLLNETMNEAPEETKIVIKKGLEFKDGMNVLGLIGFFIAFGIAMGKMGEQAKLMVEFFNILNEIVMKLVIMIMWYSPLGIACLICGKIIAIKDLEVVARQLGMYMITVIVGLIIHGGIFLPLIYFVVTRKNPFSFFAGIFQAWITALGTASSAGTLPVTFRCLEDNLGIDKRVTRFVLPVGATINMDGTALYEAVAAIFIAQMNGVILDGGQIVTVSLTATLASIGAASIPSAGLVTMLLILTAVGLPTEDISLLVAVDWLLDRMRTSVNVVGDSFGAGIVYHLSKSELDTIDSQHRMHEDIEMTKTQSVYDDTKNHRESNSNQCVYAAHNSVVIDECKVTLAANGKSADCSVEEEPWKREK.

Over residues 1 to 11 the composition is skewed to polar residues; the sequence is MASTEGANNMP. The segment at 1-29 is disordered; that stretch reads MASTEGANNMPKQVEVRMHDSHLSSEEPK. Residues 1–44 lie on the Cytoplasmic side of the membrane; sequence MASTEGANNMPKQVEVRMHDSHLSSEEPKHRNLGMRMCDKLGKN. Serine 3, serine 21, serine 24, and serine 25 each carry phosphoserine. The span at 14–29 shows a compositional bias: basic and acidic residues; the sequence is VEVRMHDSHLSSEEPK. Cysteine 38 is lipidated: S-palmitoyl cysteine. 3 consecutive transmembrane segments (helical) span residues 45 to 64, 88 to 108, and 121 to 142; these read LLLS…GGLL, MLKM…LSGL, and MVYY…VLAI. Asparagine 205 and asparagine 215 each carry an N-linked (GlcNAc...) asparagine glycan. 3 helical membrane-spanning segments follow: residues 235-258, 268-295, and 317-338; these read FKDG…MGKM, FFNI…ACLI, and ITVI…YFVV. Residues 344–374 constitute an intramembrane region (discontinuously helical); sequence FSFFAGIFQAWITALGTASSAGTLPVTFRCL. Residue 361–363 participates in L-aspartate binding; the sequence is ASS. The helical transmembrane segment at 384–410 threads the bilayer; that stretch reads VTRFVLPVGATINMDGTALYEAVAAIF. Residues glycine 392, threonine 394, and asparagine 396 each coordinate Na(+). Residues threonine 400, 441–445, aspartate 474, and asparagine 481 contribute to the L-aspartate site; that span reads IPSAG. Positions 424–457 form an intramembrane region, discontinuously helical; sequence IVTVSLTATLASIGAASIPSAGLVTMLLILTAVG. The helical transmembrane segment at 471 to 492 threads the bilayer; that stretch reads WLLDRMRTSVNVVGDSFGAGIV. Residues asparagine 481 and aspartate 485 each coordinate Na(+). 4 positions are modified to phosphoserine: serine 505, serine 520, serine 531, and serine 533. At tyrosine 538 the chain carries Phosphotyrosine. 3 positions are modified to phosphoserine: serine 543, serine 559, and serine 563.

It belongs to the dicarboxylate/amino acid:cation symporter (DAACS) (TC 2.A.23) family. SLC1A2 subfamily. As to quaternary structure, homotrimer. Interacts with AJUBA. Glycosylated. Post-translationally, palmitoylation at Cys-38 is not required for correct subcellular localization, but is important for glutamate uptake activity. In terms of tissue distribution, localized in brain and is highly enriched in the Purkinje cell layer in cerebellum.

The protein localises to the cell membrane. It catalyses the reaction K(+)(in) + L-glutamate(out) + 3 Na(+)(out) + H(+)(out) = K(+)(out) + L-glutamate(in) + 3 Na(+)(in) + H(+)(in). It carries out the reaction D-aspartate(out) + K(+)(in) + 3 Na(+)(out) + H(+)(out) = D-aspartate(in) + K(+)(out) + 3 Na(+)(in) + H(+)(in). The catalysed reaction is K(+)(in) + L-aspartate(out) + 3 Na(+)(out) + H(+)(out) = K(+)(out) + L-aspartate(in) + 3 Na(+)(in) + H(+)(in). In terms of biological role, sodium-dependent, high-affinity amino acid transporter that mediates the uptake of L-glutamate and also L-aspartate and D-aspartate. Functions as a symporter that transports one amino acid molecule together with two or three Na(+) ions and one proton, in parallel with the counter-transport of one K(+) ion. Mediates Cl(-) flux that is not coupled to amino acid transport; this avoids the accumulation of negative charges due to aspartate and Na(+) symport. Essential for the rapid removal of released glutamate from the synaptic cleft, and for terminating the postsynaptic action of glutamate. The chain is Excitatory amino acid transporter 2 (Slc1a2) from Rattus norvegicus (Rat).